Here is a 285-residue protein sequence, read N- to C-terminus: Phasyl DNA replicon protein arp (285 aa).

Functionally, essential for autonomous replication of the phasyl DNA replicon. The chain is Phasyl DNA replicon protein arp (arp) from Escherichia coli.